The primary structure comprises 362 residues: Probable endopolygalacturonase B (362 aa).

The signal sequence occupies residues 1-20; that stretch reads MHFLQNAFVAATMGAAPAAA. Residues 21-25 constitute a propeptide that is removed on maturation; that stretch reads TPLEK. Cysteine 28 and cysteine 43 are disulfide-bonded. 6 PbH1 repeats span residues 155 to 184, 185 to 206, 207 to 227, 236 to 257, 265 to 287, and 299 to 344; these read ADHLTITDVTIDDSAGTSKGHNTDAFDIGQ, STYITIDGATVYNQDDCLAINS, GEHITFTNGYCDGGHGLSIGS, VNDVTISNSKVVNSQNGVRIKT, VENVKFEDITLSDISKYGIVVEQ, and TNGV…DVTG. Aspartate 199 acts as the Proton donor in catalysis. Cysteines 201 and 217 form a disulfide. The active site involves histidine 221. A disulfide bridge connects residues cysteine 327 and cysteine 332. N-linked (GlcNAc...) asparagine glycosylation occurs at asparagine 334. Residues cysteine 351 and cysteine 360 are joined by a disulfide bond.

It belongs to the glycosyl hydrolase 28 family.

It localises to the secreted. The enzyme catalyses (1,4-alpha-D-galacturonosyl)n+m + H2O = (1,4-alpha-D-galacturonosyl)n + (1,4-alpha-D-galacturonosyl)m.. Involved in maceration and soft-rotting of plant tissue. Hydrolyzes the 1,4-alpha glycosidic bonds of de-esterified pectate in the smooth region of the plant cell wall. In Aspergillus kawachii (White koji mold), this protein is Probable endopolygalacturonase B (pgaB).